Consider the following 417-residue polypeptide: Peptide chain release factor subunit 1 (417 aa).

This sequence belongs to the eukaryotic release factor 1 family. Heterodimer of two subunits, one of which binds GTP.

Its subcellular location is the cytoplasm. Its function is as follows. Directs the termination of nascent peptide synthesis (translation) in response to the termination codons UAA, UAG and UGA. The polypeptide is Peptide chain release factor subunit 1 (prf1) (Thermoplasma acidophilum (strain ATCC 25905 / DSM 1728 / JCM 9062 / NBRC 15155 / AMRC-C165)).